Here is a 65-residue protein sequence, read N- to C-terminus: Toxin Co52 (65 aa).

The region spanning glutamate 2–cysteine 65 is the LCN-type CS-alpha/beta domain. 4 disulfides stabilise this stretch: cysteine 12–cysteine 65, cysteine 16–cysteine 41, cysteine 25–cysteine 46, and cysteine 29–cysteine 48.

Expressed by the venom gland.

Its subcellular location is the secreted. Functionally, beta toxins bind voltage-independently at site-4 of sodium channels (Nav) and shift the voltage of activation toward more negative potentials thereby affecting sodium channel activation and promoting spontaneous and repetitive firing. Not toxic to mice, chicks, crickets or woodlice (at 5 ug). This Centruroides ornatus (Scorpion) protein is Toxin Co52.